A 255-amino-acid chain; its full sequence is Imidazole glycerol phosphate synthase subunit HisF (255 aa).

Catalysis depends on residues Asp-13 and Asp-132.

Belongs to the HisA/HisF family. Heterodimer of HisH and HisF.

It is found in the cytoplasm. It carries out the reaction 5-[(5-phospho-1-deoxy-D-ribulos-1-ylimino)methylamino]-1-(5-phospho-beta-D-ribosyl)imidazole-4-carboxamide + L-glutamine = D-erythro-1-(imidazol-4-yl)glycerol 3-phosphate + 5-amino-1-(5-phospho-beta-D-ribosyl)imidazole-4-carboxamide + L-glutamate + H(+). It functions in the pathway amino-acid biosynthesis; L-histidine biosynthesis; L-histidine from 5-phospho-alpha-D-ribose 1-diphosphate: step 5/9. Functionally, IGPS catalyzes the conversion of PRFAR and glutamine to IGP, AICAR and glutamate. The HisF subunit catalyzes the cyclization activity that produces IGP and AICAR from PRFAR using the ammonia provided by the HisH subunit. The sequence is that of Imidazole glycerol phosphate synthase subunit HisF from Leptospira biflexa serovar Patoc (strain Patoc 1 / ATCC 23582 / Paris).